We begin with the raw amino-acid sequence, 695 residues long: Probable pre-mRNA-splicing factor ATP-dependent RNA helicase DEAH9 (695 aa).

In terms of domain architecture, Helicase ATP-binding spans 58–223 (LYLVENHATT…FNSSKKRHAP (166 aa)). An ATP-binding site is contributed by 71–78 (GETGSGKT). Positions 170-173 (DEAH) match the DEAH box motif. The Helicase C-terminal domain maps to 261-438 (SVVSTILLIN…STVIQLKALG (178 aa)).

It belongs to the DEAD box helicase family. DEAH subfamily. DDX35 sub-subfamily.

It catalyses the reaction ATP + H2O = ADP + phosphate + H(+). May be involved in pre-mRNA splicing. In Arabidopsis thaliana (Mouse-ear cress), this protein is Probable pre-mRNA-splicing factor ATP-dependent RNA helicase DEAH9.